Here is a 335-residue protein sequence, read N- to C-terminus: Dolichyl-diphosphooligosaccharide--protein glycosyltransferase subunit MAGT1 (335 aa).

Positions 1 to 29 (MAARWRFWCVSVTMVVALLIVCDVPSASA) are cleaved as a signal peptide. Over 30–184 (QRKKEMVLSE…DVNIRVIRPP (155 aa)) the chain is Extracellular. Positions 47–175 (WTNKRPVIRM…IARWIADRTD (129 aa)) constitute a Thioredoxin domain. N-linked (GlcNAc...) asparagine glycosylation is present at Asn-71. Cysteines 87 and 90 form a disulfide. A helical transmembrane segment spans residues 185–205 (NYAGPLMLGLLLAVIGGLVYL). Residues 206–209 (RRSN) are Cytoplasmic-facing. Residues 210–230 (MEFLFNKTGWAFAALCFVLAM) form a helical membrane-spanning segment. Over 231–270 (TSGQMWNHIRGPPYAHKNPHTGHVNYIHGSSQAQFVAETH) the chain is Extracellular. A helical transmembrane segment spans residues 271 to 291 (IVLLFNGGVTLGMVLLCEAAT). The Cytoplasmic segment spans residues 292–300 (SDMDIGKRK). The helical transmembrane segment at 301–321 (IMCVAGIGLVVLFFSWMLSIF) threads the bilayer. Over 322-335 (RSKYHGYPYSFLMS) the chain is Extracellular.

The protein belongs to the OST3/OST6 family. In terms of assembly, accessory component of the STT3B-containing form of the oligosaccharyltransferase (OST) complex. OST exists in two different complex forms which contain common core subunits RPN1, RPN2, OST48, OST4, DAD1 and TMEM258, either STT3A or STT3B as catalytic subunits, and form-specific accessory subunits. OST can form stable complexes with the Sec61 complex or with both the Sec61 and TRAP complexes. The association of TUSC3 or MAGT1 with the STT3B-containing complex seems to be mutually exclusvice. Ubiquitous. Expressed at very low levels in brain, lung and kidney.

It is found in the cell membrane. The protein localises to the endoplasmic reticulum. Its subcellular location is the endoplasmic reticulum membrane. It participates in protein modification; protein glycosylation. Accessory component of the STT3B-containing form of the N-oligosaccharyl transferase (OST) complex which catalyzes the transfer of a high mannose oligosaccharide from a lipid-linked oligosaccharide donor to an asparagine residue within an Asn-X-Ser/Thr consensus motif in nascent polypeptide chains. Involved in N-glycosylation of STT3B-dependent substrates. Specifically required for the glycosylation of a subset of acceptor sites that are near cysteine residues; in this function seems to act redundantly with TUSC3. In its oxidized form proposed to form transient mixed disulfides with a glycoprotein substrate to facilitate access of STT3B to the unmodified acceptor site. Also has oxidoreductase-independent functions in the STT3B-containing OST complex possibly involving substrate recognition. Could indirectly play a role in Mg(2+) transport in epithelial cells. This Homo sapiens (Human) protein is Dolichyl-diphosphooligosaccharide--protein glycosyltransferase subunit MAGT1.